The sequence spans 432 residues: MKFKSELEQAIIATVQQEVVPALGCTEPVSLALAAAVARQYLGALPDRIEAKVSPNLMKNGMGVTVPGTGTVGLTMAAAIGAIGGDPNGGLEVLKHITNEQVALAKQMINDHKIEVSISDTEHILYSEATLFNTDQQVKVRIAAHHTNVIYIEKNGELLFSKPCVVESENAENVFANLNAKDIYDFSLNVELEKIRFIQQAAILNSALSQEGLNQDYGLHIGRTLQKQIGKGLISDDLLNRIVIETTAASDARMGGANLPAMSNSGSGNQGITATMPVVVVARHVAAGEEQLIRALFLSHLMAIYIHSKLPKLSALCAVTTAAMGSCAGVAWLLTGKFEAISMAISSMIGDISGIICDGAANSCAMKVSTSVSSSYKSILMALDDTQVTGNEGIVEHQIDRSINNLCAIASRSMQYTDRQVIEIMVSKPKSL.

It belongs to the UPF0597 family.

The sequence is that of UPF0597 protein APL_1605 from Actinobacillus pleuropneumoniae serotype 5b (strain L20).